The primary structure comprises 587 residues: Beta-(1--&gt;2)glucan export ATP-binding/permease protein NdvA (587 aa).

The ABC transmembrane type-1 domain occupies 21–301; sequence VSLVVVANIV…MRQFATQIFE (281 aa). The next 6 membrane-spanning stretches (helical) occupy residues 23-43, 57-77, 128-148, 158-178, 248-268, and 272-292; these read LVVV…ILFG, PILF…VLVA, GLWL…ALLI, LSAV…VVMS, MAST…VQAG, and VGDV…LDLM. Positions 335–569 constitute an ABC transporter domain; sequence IEFRDVSFGF…NGRFAALLRA (235 aa). 368-375 serves as a coordination point for ATP; it reads GPTGAGKT.

The protein belongs to the ABC transporter superfamily. Beta-(1--&gt;2)glucan exporter (TC 3.A.1.108.1) family. As to quaternary structure, homodimer.

Its subcellular location is the cell inner membrane. It carries out the reaction [(1-&gt;2)-beta-D-glucosyl](n)(in) + ATP + H2O = [(1-&gt;2)-beta-D-glucosyl](n)(out) + ADP + phosphate + H(+). In terms of biological role, involved in beta-(1--&gt;2)glucan export. Transmembrane domains (TMD) form a pore in the inner membrane and the ATP-binding domain (NBD) is responsible for energy generation. This is Beta-(1--&gt;2)glucan export ATP-binding/permease protein NdvA from Rhizobium johnstonii (strain DSM 114642 / LMG 32736 / 3841) (Rhizobium leguminosarum bv. viciae).